The chain runs to 233 residues: Glucosamine-6-phosphate deaminase (233 aa).

D62 functions as the Proton acceptor; for enolization step in the catalytic mechanism. Catalysis depends on N128, which acts as the For ring-opening step. H130 functions as the Proton acceptor; for ring-opening step in the catalytic mechanism. E135 (for ring-opening step) is an active-site residue.

This sequence belongs to the glucosamine/galactosamine-6-phosphate isomerase family. NagB subfamily.

The enzyme catalyses alpha-D-glucosamine 6-phosphate + H2O = beta-D-fructose 6-phosphate + NH4(+). Its pathway is amino-sugar metabolism; N-acetylneuraminate degradation; D-fructose 6-phosphate from N-acetylneuraminate: step 5/5. Functionally, catalyzes the reversible isomerization-deamination of glucosamine 6-phosphate (GlcN6P) to form fructose 6-phosphate (Fru6P) and ammonium ion. This is Glucosamine-6-phosphate deaminase from Streptococcus pneumoniae serotype 4 (strain ATCC BAA-334 / TIGR4).